Reading from the N-terminus, the 108-residue chain is uncharacterized protein (108 aa).

This is an uncharacterized protein from Acanthamoeba polyphaga (Amoeba).